A 144-amino-acid chain; its full sequence is Large ribosomal subunit protein uL15 (144 aa).

Residues 1–56 (MELNNLKPAAGAKHAKRRVGRGIGSGLGKTAGRGHKGQKSRSGGFHKVGFEGGQMP) form a disordered region. Gly residues predominate over residues 21–31 (RGIGSGLGKTA).

The protein belongs to the universal ribosomal protein uL15 family. Part of the 50S ribosomal subunit.

Binds to the 23S rRNA. This is Large ribosomal subunit protein uL15 from Burkholderia ambifaria (strain MC40-6).